The sequence spans 427 residues: ATP-dependent RNA helicase DDX39A (427 aa).

Over residues M1 to P19 the composition is skewed to acidic residues. Residues M1 to G36 form a disordered region. The residue at position 2 (A2) is an N-acetylalanine. Residue K31 forms a Glycyl lysine isopeptide (Lys-Gly) (interchain with G-Cter in SUMO2) linkage. Residue K35 is modified to N6-acetyllysine; alternate. Residue K35 forms a Glycyl lysine isopeptide (Lys-Gly) (interchain with G-Cter in SUMO2); alternate linkage. A Phosphoserine modification is found at S37. The Q motif signature appears at S44–H72. Residues I75–V248 enclose the Helicase ATP-binding domain. Residue A88–T95 coordinates ATP. Residues K154 and K162 each participate in a glycyl lysine isopeptide (Lys-Gly) (interchain with G-Cter in SUMO2) cross-link. T171 carries the phosphothreonine modification. The DECD box motif lies at D195–D198. Glycyl lysine isopeptide (Lys-Gly) (interchain with G-Cter in SUMO2) cross-links involve residues K240 and K255. The Helicase C-terminal domain occupies G260–T421. At S426 the chain carries Phosphoserine.

This sequence belongs to the DEAD box helicase family. DECD subfamily. Binds ALYREF/THOC4 and DDX39B/BAT1. Interacts with the apo-AREX complex component SARNP. Interacts with MX1. Interacts with MCM3AP isoform GANP. Interacts with ECD. Interacts with PHAX; this interaction stimulates PHAX RNA binding activity. Post-translationally, SUMOylated by RANBP2; SUMOylation modification affects its ability to bind RNA.

It localises to the nucleus. Its subcellular location is the cytoplasm. It catalyses the reaction ATP + H2O = ADP + phosphate + H(+). In terms of biological role, helicase that plays an essential role in mRNA export and is involved in multiple steps in RNA metabolism including alternative splicing. Regulates nuclear mRNA export to the cytoplasm through association with ECD. Also involved in spliceosomal uridine-rich small nuclear RNA (U snRNA) export by stimulating the RNA binding of adapter PHAX. Plays a role in the negative regulation of type I IFN production by increasing the nuclear retention of antiviral transcripts and thus reducing their protein expression. Independently of the interferon pathway, plays an antiviral role against alphaviruses by binding to a 5' conserved sequence element in the viral genomic RNA. The protein is ATP-dependent RNA helicase DDX39A of Mus musculus (Mouse).